A 713-amino-acid polypeptide reads, in one-letter code: Putative ERAD-associated E3 ubiquitin-protein ligase component (713 aa).

The first 20 residues, Met-1–Thr-20, serve as a signal peptide directing secretion. N-linked (GlcNAc...) asparagine glycosylation is found at Asn-48 and Asn-123. 2 Sel1-like repeats span residues Pro-83–Tyr-124 and Thr-125–Ser-160. Asn-211 carries N-linked (GlcNAc...) asparagine glycosylation. Sel1-like repeat units lie at residues Ile-212 to Asn-248, Ser-280 to His-315, Ile-490 to Pro-525, and Ala-527 to Thr-562. N-linked (GlcNAc...) asparagine glycosylation is present at Asn-314. The tract at residues Gln-621–Met-655 is disordered. Polar residues predominate over residues Val-631 to Thr-652. The chain crosses the membrane as a helical span at residues Gly-671–Met-691.

Belongs to the sel-1 family.

The protein resides in the endoplasmic reticulum membrane. Its function is as follows. Component of the endoplasmic reticulum quality control (ERQC) system involved in ubiquitin-dependent degradation of missfolded endoplasmic reticulum proteins. This Schizosaccharomyces pombe (strain 972 / ATCC 24843) (Fission yeast) protein is Putative ERAD-associated E3 ubiquitin-protein ligase component.